A 227-amino-acid chain; its full sequence is Casparian strip membrane protein 2 (227 aa).

The Cytoplasmic segment spans residues 1–59; sequence MSSTSEATVIHMDGAAGKTPATAVPPPPPPAPTAPVQQQRKAGGVPFLLRSGAEGFRRC. A disordered region spans residues 17–37; it reads GKTPATAVPPPPPPAPTAPVQ. Pro residues predominate over residues 23–33; it reads AVPPPPPPAPT. The chain crosses the membrane as a helical span at residues 60-80; the sequence is MALLDLLLRVAAMGPTLAAAI. Residues 81 to 107 are Extracellular-facing; sequence STGTSDETLSVFTHYFQFRARFDDFSA. A helical transmembrane segment spans residues 108–128; sequence FTFFMVANAVAAGYLLMSLPF. At 129–149 the chain is on the cytoplasmic side; sequence SAFGVIRPKATSVRLLLLICD. Residues 150–170 traverse the membrane as a helical segment; that stretch reads TIMVVLVTAAASAAAAIVYVA. The Extracellular segment spans residues 171-197; sequence HEGNRRANWVPICMQFHGFCKRTSGAV. Residues 198 to 218 traverse the membrane as a helical segment; the sequence is VASFLAVLIFILLVFLGACAI. The Cytoplasmic segment spans residues 219–227; it reads RRRHTTTKH.

Belongs to the Casparian strip membrane proteins (CASP) family. As to quaternary structure, homodimer and heterodimers.

The protein resides in the cell membrane. Its function is as follows. Regulates membrane-cell wall junctions and localized cell wall deposition. Required for establishment of the Casparian strip membrane domain (CSD) and the subsequent formation of Casparian strips, a cell wall modification of the root endodermis that determines an apoplastic barrier between the intraorganismal apoplasm and the extraorganismal apoplasm and prevents lateral diffusion. This Brachypodium distachyon (Purple false brome) protein is Casparian strip membrane protein 2.